Here is a 499-residue protein sequence, read N- to C-terminus: Cytochrome P450 ARB_01131 (499 aa).

The N-terminal stretch at M1–S21 is a signal peptide. N-linked (GlcNAc...) asparagine glycosylation is present at N23. Position 437 (C437) interacts with heme.

This sequence belongs to the cytochrome P450 family. Heme serves as cofactor.

Its function is as follows. Together with an NADPH cytochrome P450 the enzyme system catalyzes the terminal hydroxylation as the first step in the assimilation of alkanes and fatty acids. This chain is Cytochrome P450 ARB_01131, found in Arthroderma benhamiae (strain ATCC MYA-4681 / CBS 112371) (Trichophyton mentagrophytes).